The chain runs to 299 residues: Lysine exporter LysO (299 aa).

Helical transmembrane passes span 1 to 21 (MFSG…IPLR), 31 to 51 (QLLS…LAFL), 58 to 78 (LLAI…CNIA), 109 to 129 (LKLC…LAFL), 131 to 151 (HATE…GIQL), 169 to 189 (IVAV…AFIL), 207 to 227 (SLSG…AAFF), and 277 to 297 (PAAI…IAFF).

Belongs to the LysO family.

It localises to the cell inner membrane. Its function is as follows. Mediates export of lysine. In Escherichia coli (strain K12), this protein is Lysine exporter LysO.